Reading from the N-terminus, the 139-residue chain is NADPH-dependent 7-cyano-7-deazaguanine reductase (139 aa).

Residue Cys-34 is the Thioimide intermediate of the active site. The active-site Proton donor is the Asp-41. Residues 56 to 58 (IEL) and 75 to 76 (HE) each bind substrate.

It belongs to the GTP cyclohydrolase I family. QueF type 1 subfamily.

The protein resides in the cytoplasm. The catalysed reaction is 7-aminomethyl-7-carbaguanine + 2 NADP(+) = 7-cyano-7-deazaguanine + 2 NADPH + 3 H(+). It functions in the pathway tRNA modification; tRNA-queuosine biosynthesis. In terms of biological role, catalyzes the NADPH-dependent reduction of 7-cyano-7-deazaguanine (preQ0) to 7-aminomethyl-7-deazaguanine (preQ1). This chain is NADPH-dependent 7-cyano-7-deazaguanine reductase, found in Nitrosomonas eutropha (strain DSM 101675 / C91 / Nm57).